An 891-amino-acid polypeptide reads, in one-letter code: Protein translocase subunit SecA 1 (891 aa).

ATP-binding positions include Q86, 104-108 (GEGKT), and D493. The span at 845-873 (KQVAKPIEASHGDGNRKKAPVVKEKEAGR) shows a compositional bias: basic and acidic residues. Positions 845 to 891 (KQVAKPIEASHGDGNRKKAPVVKEKEAGRNDPCPCGSGKKYKKCCGE) are disordered. Residues C877, C879, C888, and C889 each contribute to the Zn(2+) site.

The protein belongs to the SecA family. As to quaternary structure, monomer and homodimer. Part of the essential Sec protein translocation apparatus which comprises SecA, SecYEG and auxiliary proteins SecDF. Other proteins may also be involved. The cofactor is Zn(2+).

Its subcellular location is the cell membrane. The protein localises to the cytoplasm. It carries out the reaction ATP + H2O + cellular proteinSide 1 = ADP + phosphate + cellular proteinSide 2.. Its function is as follows. Part of the Sec protein translocase complex. Interacts with the SecYEG preprotein conducting channel. Has a central role in coupling the hydrolysis of ATP to the transfer of proteins into and across the cell membrane, serving as an ATP-driven molecular motor driving the stepwise translocation of polypeptide chains across the membrane. The chain is Protein translocase subunit SecA 1 from Alkaliphilus metalliredigens (strain QYMF).